The following is a 147-amino-acid chain: UPF0179 protein NP_3406A (147 aa).

The protein belongs to the UPF0179 family.

In Natronomonas pharaonis (strain ATCC 35678 / DSM 2160 / CIP 103997 / JCM 8858 / NBRC 14720 / NCIMB 2260 / Gabara) (Halobacterium pharaonis), this protein is UPF0179 protein NP_3406A.